The sequence spans 423 residues: AUGMIN subunit 4 (423 aa).

Positions 267 to 287 (IEEIERDEAALREDLYSADRK) form a coiled coil.

Belongs to the HAUS4 family. In terms of assembly, part of the augmin complex composed of 8 subunits. The complex acts on microtubules and interacts with gamma-tubulin in spindles and the phragmoplast.

It is found in the cytoplasm. Its subcellular location is the cytoskeleton. The protein resides in the spindle. The protein localises to the phragmoplast. Involved in microtubules reorganization during spindle and phragmoplast development. In Arabidopsis thaliana (Mouse-ear cress), this protein is AUGMIN subunit 4 (AUG4).